A 711-amino-acid chain; its full sequence is Taperin (711 aa).

Disordered regions lie at residues 134 to 305 (SRLL…APKP), 328 to 384 (RNSF…LGKS), and 414 to 438 (QRPS…GLRV). Pro residues predominate over residues 157 to 180 (PPPPPPPPAPPRPPPAAPSPPAAP). Over residues 197–206 (LQKTGSNSFT) the composition is skewed to polar residues. Ser-241 bears the Phosphoserine mark. The segment covering 267 to 282 (TPSATPASPPASATPS) has biased composition (low complexity). The segment covering 283 to 296 (QRQCVSAATSTNDS) has biased composition (polar residues). Residues Ser-362, Ser-418, and Ser-463 each carry the phosphoserine modification. 4 disordered regions span residues 500–535 (TFTV…EEAS), 572–630 (SRKK…EKPF), 642–662 (SVRP…SYTP), and 674–711 (QALE…ALYF). Polar residues-rich tracts occupy residues 512–521 (LQDQHFSQAN) and 581–590 (NDKSLQTTFE). Positions 597 to 624 (LEQEEEVDQQEEEEEEEEEEEEEEEGSG) are enriched in acidic residues.

The protein belongs to the taperin family. As to quaternary structure, interacts with GRXCR2; the interaction restricts TPRN to the stereocilum basal region. Interacts with actin ACTB; the interaction may stabilize stereocilia. Interacts with CLIC5. Interacts with PTPRQ. TPRN, CLIC5 and PTPQR form concentric rings at the base of stereocilia and may form a complex. Interacts with phosphatase PPP1CA; the interaction results in inhibition of PPC1A phosphatase activity. Interacts with DNA damage response proteins XRCC6/KU70, XRCC5/KU80, PARP1, TOP1 and TOP2A; these interactions recruit TPRN to sites of DNA damage where it may play a role in DNA repair. In terms of tissue distribution, expression is detected in fetal cochlea.

The protein resides in the cell projection. Its subcellular location is the stereocilium. It is found in the microvillus. It localises to the nucleus. The protein localises to the nucleoplasm. The protein resides in the cytoplasm. Functionally, essential for hearing. Required for maintenance of stereocilia on both inner and outer hair cells. Necessary for the integrity of the stereociliary rootlet. May act as an actin cytoskeleton regulator involved in the regulation of actin dynamics at the pointed end in hair cells. Forms rings at the base of stereocilia and binds actin filaments in the stereocilia which may stabilize the stereocilia. Acts as a strong inhibitor of PPP1CA phosphatase activity. Recruited to sites of DNA damage and may play a role in DNA damage repair. The protein is Taperin (TPRN) of Homo sapiens (Human).